Here is a 463-residue protein sequence, read N- to C-terminus: uncharacterized protein (463 aa).

Positions 1–93 (MSYMIAVPDM…AGAYASAEAT (93 aa)) constitute a PE domain. 2 disordered regions span residues 231-320 (GGAG…AGNG) and 408-463 (NGGD…TPGQ). Positions 408–451 (NGGDGGKGGDAQLIGNGGNGGNGGKGGTGLMPGINGTGGAGGSR) are enriched in gly residues.

Belongs to the mycobacterial PE family. PGRS subfamily.

This is an uncharacterized protein from Mycobacterium tuberculosis (strain ATCC 25618 / H37Rv).